A 594-amino-acid chain; its full sequence is MSENYRAPIVVVVGHVDVGKTLLLDKIRNTMVAYREPGMITQHIGLSYLPWPIIEKYAAPVIERYRLKGKVWVKGFLMVDTPGHAAFSNLRRRGGSVADLAILVIDLTRGFEEQTYESLILLKSRNIPFVVAANKVDRIYGWKPIPNASILDSYNAQDEETQGRLEEALANIIMDFNKQGFEAERFDRITDFSRQVPIVPTSAVTGEGIPDLLVLMAGLTQRLVKDRLRLVGGPGKGVVMEVKEEKGLGTTMDVVLYDGVMRKGDTIVAMGLNGPVVTRIRMMVMPKPLDEMRDPEDKYMHINEVEAAAGVKVIADGLDDVVPGSSVYVVQGDPKPYIDEVVKDAASVKIETDQIGVVAKADTLGTLEAMVLYLRSQGIPVRKADIGPVTRRDIIDASVVRRKNPLYGVVLAFNVKVPKEVEEEAKVQLVTIFQNNILYRLVEEFTKWFNEEKSRLIESELSKYVRPGKIAIIPGYVFRRSDPAIVGVEVLGGLIKPGYRLVKANGKEVGVIMQIQDKGKPIQVAKKGMSVAISIEGNVIVGRHIKEGDVLYVNVPLEHAVKLIMQYKDHLSSDEVEVLEEFMKLRSTWKAQAQ.

Residues Tyr-5–Val-224 enclose the tr-type G domain. A G1 region spans residues Gly-14 to Thr-21. Gly-14–Thr-21 contacts GTP. Residues Met-39–His-43 form a G2 region. Residues Asp-80–Gly-83 form a G3 region. Residues Asp-80–His-84 and Asn-134–Asp-137 contribute to the GTP site. The interval Asn-134 to Asp-137 is G4. The G5 stretch occupies residues Ser-202 to Val-204.

It belongs to the TRAFAC class translation factor GTPase superfamily. Classic translation factor GTPase family. IF-2 subfamily.

Function in general translation initiation by promoting the binding of the formylmethionine-tRNA to ribosomes. Seems to function along with eIF-2. This is Probable translation initiation factor IF-2 from Caldivirga maquilingensis (strain ATCC 700844 / DSM 13496 / JCM 10307 / IC-167).